Consider the following 155-residue polypeptide: Protein FAM162A (155 aa).

Positions 77 to 103 are required for proapoptotic activity; the sequence is RFKKEEEIPETISFEMLDAAKNKLRVK. A helical membrane pass occupies residues 104 to 121; the sequence is VSYLMIALTVAGCIYMVI.

This sequence belongs to the UPF0389 family. In terms of assembly, interacts with HSP90AB1; HSP90AB1 is essential for FAM162A mitochondrial localization and pro-apoptotic activity. Interacts with VDAC2; the interaction is probably involved in inducing mitochondrial permeability transition.

It localises to the mitochondrion membrane. Its function is as follows. Proposed to be involved in regulation of apoptosis; the exact mechanism may differ between cell types/tissues. May be involved in hypoxia-induced cell death of transformed cells implicating cytochrome C release and caspase activation (such as CASP9) and inducing mitochondrial permeability transition. May be involved in hypoxia-induced cell death of neuronal cells probably by promoting release of AIFM1 from mitochondria to cytoplasm and its translocation to the nucleus; however, the involvement of caspases has been reported conflictingly. The protein is Protein FAM162A (Fam162a) of Mus musculus (Mouse).